The sequence spans 180 residues: MKSIYFVAGLFVMLVQGSWQRSLQDTEEKSRSFSASQADPLSDPDQMNEDKRHSQGTFTSDYSKYLDSRRAQDFVQWLMNTKRNRNNIAKRHDEFERHAEGTFTSDVSSYLEGQAAKEFIAWLVKGRGRRDFPEEVAIVEELGRRHADGSFSDEMNTILDNLAARDFINWLIQTKITDRK.

A signal peptide spans Met-1–Gln-20. The disordered stretch occupies residues Thr-26–Thr-59. Position 54 is a phosphoserine (Ser-54). The propeptide occupies Asn-84 to Ala-89. A phosphoserine mark is found at Ser-105 and Ser-108. Arg-127 carries the post-translational modification Arginine amide. A propeptide spanning residues Asp-131–Arg-145 is cleaved from the precursor. A phosphoserine mark is found at Ser-150 and Ser-152.

It belongs to the glucagon family. Post-translationally, proglucagon is post-translationally processed in a tissue-specific manner in pancreatic A cells and intestinal L cells. In pancreatic A cells, the major bioactive hormone is glucagon cleaved by PCSK2/PC2. In the intestinal L cells PCSK1/PC1 liberates GLP-1, GLP-2, glicentin and oxyntomodulin. GLP-1 is further N-terminally truncated by post-translational processing in the intestinal L cells resulting in GLP-1(7-37) GLP-1-(7-36)amide. The C-terminal amidation is neither important for the metabolism of GLP-1 nor for its effects on the endocrine pancreas. In terms of tissue distribution, secreted in the A cells of the islets of Langerhans. Secreted in the A cells of the islets of Langerhans. Secreted from enteroendocrine L cells throughout the gastrointestinal tract. Also secreted in selected neurons in the brain. As to expression, secreted from enteroendocrine cells throughout the gastrointestinal tract. Also secreted in selected neurons in the brain. In terms of tissue distribution, secreted from enteroendocrine cells throughout the gastrointestinal tract.

Its subcellular location is the secreted. Functionally, plays a key role in glucose metabolism and homeostasis. Regulates blood glucose by increasing gluconeogenesis and decreasing glycolysis. A counterregulatory hormone of insulin, raises plasma glucose levels in response to insulin-induced hypoglycemia. Plays an important role in initiating and maintaining hyperglycemic conditions in diabetes. Its function is as follows. Potent stimulator of glucose-dependent insulin release. Also stimulates insulin release in response to IL6. Plays important roles on gastric motility and the suppression of plasma glucagon levels. May be involved in the suppression of satiety and stimulation of glucose disposal in peripheral tissues, independent of the actions of insulin. Has growth-promoting activities on intestinal epithelium. May also regulate the hypothalamic pituitary axis (HPA) via effects on LH, TSH, CRH, oxytocin, and vasopressin secretion. Increases islet mass through stimulation of islet neogenesis and pancreatic beta cell proliferation. Inhibits beta cell apoptosis. Stimulates intestinal growth and up-regulates villus height in the small intestine, concomitant with increased crypt cell proliferation and decreased enterocyte apoptosis. The gastrointestinal tract, from the stomach to the colon is the principal target for GLP-2 action. Plays a key role in nutrient homeostasis, enhancing nutrient assimilation through enhanced gastrointestinal function, as well as increasing nutrient disposal. Stimulates intestinal glucose transport and decreases mucosal permeability. In terms of biological role, significantly reduces food intake. Inhibits gastric emptying in humans. Suppression of gastric emptying may lead to increased gastric distension, which may contribute to satiety by causing a sensation of fullness. Functionally, may modulate gastric acid secretion and the gastro-pyloro-duodenal activity. May play an important role in intestinal mucosal growth in the early period of life. The protein is Pro-glucagon of Homo sapiens (Human).